A 154-amino-acid polypeptide reads, in one-letter code: SsrA-binding protein (154 aa).

The segment at 130 to 154 is disordered; sequence KLHDKRETERRRQDQRDIQRAIKRA. The segment covering 133 to 154 has biased composition (basic and acidic residues); it reads DKRETERRRQDQRDIQRAIKRA.

This sequence belongs to the SmpB family.

The protein resides in the cytoplasm. Required for rescue of stalled ribosomes mediated by trans-translation. Binds to transfer-messenger RNA (tmRNA), required for stable association of tmRNA with ribosomes. tmRNA and SmpB together mimic tRNA shape, replacing the anticodon stem-loop with SmpB. tmRNA is encoded by the ssrA gene; the 2 termini fold to resemble tRNA(Ala) and it encodes a 'tag peptide', a short internal open reading frame. During trans-translation Ala-aminoacylated tmRNA acts like a tRNA, entering the A-site of stalled ribosomes, displacing the stalled mRNA. The ribosome then switches to translate the ORF on the tmRNA; the nascent peptide is terminated with the 'tag peptide' encoded by the tmRNA and targeted for degradation. The ribosome is freed to recommence translation, which seems to be the essential function of trans-translation. This is SsrA-binding protein from Synechococcus elongatus (strain ATCC 33912 / PCC 7942 / FACHB-805) (Anacystis nidulans R2).